Reading from the N-terminus, the 415-residue chain is SVF1-like protein YDR222W (415 aa).

This sequence belongs to the SVF1 family.

It is found in the cytoplasm. This Saccharomyces cerevisiae (strain ATCC 204508 / S288c) (Baker's yeast) protein is SVF1-like protein YDR222W.